The chain runs to 551 residues: Calnexin (551 aa).

The N-terminal stretch at 1–23 is a signal peptide; sequence MRPQNVAGVAGTGALIMAAGALA. At 24–477 the chain is on the lumenal side; sequence DQTVFHPTSL…QAIKQMPEVA (454 aa). Residues 293–315 form a disordered region; the sequence is EEEPETIPDPEAEKPEEWDDEED. Residues 478–498 traverse the membrane as a helical segment; that stretch reads AGLAAAVFTLLGMLLALFGFI. The Cytoplasmic segment spans residues 499–551; that stretch reads GSAPTKVKQTTVKTKAVAPVAPAGEEEKKALDQAGVEIPAEGSKKRVTRSTKE. The disordered stretch occupies residues 526–551; that stretch reads KKALDQAGVEIPAEGSKKRVTRSTKE.

This sequence belongs to the calreticulin family.

The protein resides in the endoplasmic reticulum membrane. Its function is as follows. Endoplasmic reticulum (ER) chaperone that functions to stabilize non-native glycoproteins and retain them in the ER until they are properly folded or targeted for ER associated degradation (ERAD). With co-chaperone DNJ1, coordinately maintains ER homeostasis and contributes to maintenance of cell wall architecture. This is Calnexin from Cryptococcus neoformans var. grubii serotype A (strain H99 / ATCC 208821 / CBS 10515 / FGSC 9487) (Filobasidiella neoformans var. grubii).